Reading from the N-terminus, the 243-residue chain is MKIINLDSKNLASFYVACELFKQIQQHPHAKLGLATGGTMTDVYHYLVNLLIKNKVDVSQVETFNLDEYVGLKASHQQSYHTYMNKVLFEQYPHFVKNHIHIPDGLSENLEAEAERYNNLLDERGPIDIQILGIGENGHIGFNEPGTDFNSETHVVNLTESTIKANSRFFDNEKDVPRQAVSMGVKSILKAKRIILLAFGPKKKEAISKLLNEQVTEDVPATILHTHPNVEVYVDDEAAPDCL.

The active-site Proton acceptor; for enolization step is the Asp-67. Catalysis depends on Asn-137, which acts as the For ring-opening step. His-139 acts as the Proton acceptor; for ring-opening step in catalysis. Catalysis depends on Glu-144, which acts as the For ring-opening step.

The protein belongs to the glucosamine/galactosamine-6-phosphate isomerase family. NagB subfamily.

The catalysed reaction is alpha-D-glucosamine 6-phosphate + H2O = beta-D-fructose 6-phosphate + NH4(+). It functions in the pathway amino-sugar metabolism; N-acetylneuraminate degradation; D-fructose 6-phosphate from N-acetylneuraminate: step 5/5. Catalyzes the reversible isomerization-deamination of glucosamine 6-phosphate (GlcN6P) to form fructose 6-phosphate (Fru6P) and ammonium ion. This chain is Glucosamine-6-phosphate deaminase, found in Staphylococcus epidermidis (strain ATCC 12228 / FDA PCI 1200).